Consider the following 136-residue polypeptide: Transmembrane protein 203 (136 aa).

The segment at 1–51 (MLFSLRELVQWLGFATFEIFVHLLALLVFSVLLALRVDGLTPGLSWWNVFV) is interaction with STING1. A run of 4 helical transmembrane segments spans residues 14–34 (FATFEIFVHLLALLVFSVLLA), 50–72 (FVPFFAADGLSTYFTTIVSVRLF), 81–101 (VLRLFWVLTVLSLKFVFEMLL), and 112–132 (LWFGLITSPVFILLQLLMIRA). The tract at residues 52–136 (PFFAADGLST…LLMIRACRVN (85 aa)) is required for lysosomal localization of the STING-TMEM203 complex.

In terms of assembly, homodimer. Interacts with ATP2A2 and ITPR3. Interacts with STIM1 and STING1 (via transmembrane domain).

The protein resides in the endoplasmic reticulum membrane. It localises to the endoplasmic reticulum-Golgi intermediate compartment. Its subcellular location is the lysosome membrane. In terms of biological role, involved in the regulation of cellular calcium homeotasis. Required for spermatogenesis. Acts as a regulator of STING-mediated inflammatory signaling in macrophages. Forms a complex with STING, promoting the activity of TBK1 kinase and the transcription factor IRF3, leading to activation of type I interferon expression. This is Transmembrane protein 203 (Tmem203) from Mus musculus (Mouse).